The chain runs to 144 residues: Universal stress protein F (144 aa).

The protein belongs to the universal stress protein A family. In terms of assembly, homodimer.

This Escherichia coli O157:H7 protein is Universal stress protein F (uspF).